The following is a 517-amino-acid chain: Glutamate--tRNA ligase (517 aa).

Positions 14 to 24 (PSPTGPLHIGG) match the 'HIGH' region motif. The 'KMSKS' region signature appears at 266–270 (KLSKR). K269 provides a ligand contact to ATP.

It belongs to the class-I aminoacyl-tRNA synthetase family. Glutamate--tRNA ligase type 1 subfamily. In terms of assembly, monomer.

Its subcellular location is the cytoplasm. The enzyme catalyses tRNA(Glu) + L-glutamate + ATP = L-glutamyl-tRNA(Glu) + AMP + diphosphate. Catalyzes the attachment of glutamate to tRNA(Glu) in a two-step reaction: glutamate is first activated by ATP to form Glu-AMP and then transferred to the acceptor end of tRNA(Glu). In Cytophaga hutchinsonii (strain ATCC 33406 / DSM 1761 / CIP 103989 / NBRC 15051 / NCIMB 9469 / D465), this protein is Glutamate--tRNA ligase.